The chain runs to 236 residues: Uridylate kinase (236 aa).

12–15 (KISG) lines the ATP pocket. An involved in allosteric activation by GTP region spans residues 20-25 (GTNGYG). Gly54 serves as a coordination point for UMP. Gly55 and Arg59 together coordinate ATP. UMP is bound by residues Asp72 and 133 to 140 (TGNPYFST). Residues Tyr166 and Asp169 each contribute to the ATP site.

Belongs to the UMP kinase family. In terms of assembly, homohexamer.

The protein resides in the cytoplasm. The catalysed reaction is UMP + ATP = UDP + ADP. It participates in pyrimidine metabolism; CTP biosynthesis via de novo pathway; UDP from UMP (UMPK route): step 1/1. With respect to regulation, allosterically activated by GTP. Inhibited by UTP. Catalyzes the reversible phosphorylation of UMP to UDP. This Clostridium acetobutylicum (strain ATCC 824 / DSM 792 / JCM 1419 / IAM 19013 / LMG 5710 / NBRC 13948 / NRRL B-527 / VKM B-1787 / 2291 / W) protein is Uridylate kinase.